The chain runs to 724 residues: MAGQWVRTVALLAARRHWRRSSQQQLLGTLKHAPVYSYQCLVVSRSLSSVEYEPKEKTFDKILIANRGEIACRVIKTCKKMGIKTVAIHSDVDASSVHVKMADEAVCVGPAPTSKSYLNMDAIMEAIKKTRAQAVHPGYGFLSENKEFAKRLAAEDVTFIGPDTHAIQAMGDKIESKLLAKRAKVNTIPGFDGVVKDADEAVRIAREIGYPVMIKASAGGGGKGMRIAWDDEETRDGFRFSSQEAASSFGDDRLLIEKFIDNPRHIEIQVLGDKHGNALWLNERECSIQRRNQKVVEEAPSIFLDPETRQAMGEQAVALAKAVKYSSAGTVEFLVDSQKNFYFLEMNTRLQVEHPVTECITGLDLVQEMILVAKGYPLRHKQEDIPISGWAVECRVYAEDPYKSFGLPSIGRLSQYQEPIHLPGVRVDSGIQPGSDISIYYDPMISKLVTYGSDRAEALKRMEDALDNYVIRGVTHNIPLLREVIINTRFVKGDISTKFLSDVYPDGFKGHTLTLSERNQLLAIASSVFVASQLRAQRFQEHSRVPVIRPDVAKWELSVKLHDEDHTVVASNNGPAFTVEVDGSKLNVTSTWNLASPLLSVNVDGTQRTVQCLSREAGGNMSIQFLGTVYKVHILTKLAAELNKFMLEKVPKDTSSTLCSPMPGVVVAVSVKPGDMVAEGQEICVIEAMKMQNSMTAGKMGKVKLVHCKAGDTVGEGDLLVELE.

The N-terminal 48 residues, 1–48 (MAGQWVRTVALLAARRHWRRSSQQQLLGTLKHAPVYSYQCLVVSRSLS), are a transit peptide targeting the mitochondrion. Residues 58–505 (TFDKILIANR…STKFLSDVYP (448 aa)) form the Biotin carboxylation domain. Lysine 61 carries the post-translational modification N6-acetyllysine; alternate. An N6-succinyllysine; alternate modification is found at lysine 61. Position 115 is an N6-succinyllysine (lysine 115). Residue lysine 146 is modified to N6-acetyllysine; alternate. Position 146 is an N6-succinyllysine; alternate (lysine 146). The residue at position 150 (lysine 150) is an N6-acetyllysine. Residue lysine 173 coordinates ATP. An ATP-grasp domain is found at 177-374 (KLLAKRAKVN…LVQEMILVAK (198 aa)). N6-succinyllysine is present on lysine 184. Lysine 196 is modified (N6-acetyllysine; alternate). The residue at position 196 (lysine 196) is an N6-succinyllysine; alternate. Residues 205–266 (AREI…PRHI), glutamate 257, and asparagine 292 contribute to the ATP site. Position 248 is a phosphoserine (serine 248). Residue lysine 258 is modified to N6-succinyllysine. Lysine 324 carries the post-translational modification N6-acetyllysine; alternate. Position 324 is an N6-succinyllysine; alternate (lysine 324). Residues glutamate 332, glutamate 345, and asparagine 347 each contribute to the Mg(2+) site. Positions 332, 345, and 347 each coordinate Mn(2+). Residue arginine 349 is part of the active site. N6-succinyllysine is present on residues lysine 381 and lysine 403. Position 405 (phenylalanine 405) interacts with biotin. Residue lysine 492 is modified to N6-acetyllysine. An N6-succinyllysine mark is found at lysine 498, lysine 509, lysine 554, and lysine 644. One can recognise a Biotinyl-binding domain in the interval 645–724 (FMLEKVPKDT…GEGDLLVELE (80 aa)). The residue at position 690 (lysine 690) is an N6-biotinyllysine; by HLCS.

As to quaternary structure, the holoenzyme is a dodecamer composed of 6 PCCA/alpha subunits and 6 PCCB/beta subunits. Interacts (via the biotin carboxylation domain) with SIRT4. Interacts with SIRT3 and SIRT5. Mg(2+) serves as cofactor. The cofactor is Mn(2+). Biotin is required as a cofactor. In terms of processing, acetylated. The biotin cofactor is covalently attached to the C-terminal biotinyl-binding domain and is required for the catalytic activity. Biotinylation is catalyzed by HLCS.

Its subcellular location is the mitochondrion matrix. It catalyses the reaction propanoyl-CoA + hydrogencarbonate + ATP = (S)-methylmalonyl-CoA + ADP + phosphate + H(+). The catalysed reaction is butanoyl-CoA + hydrogencarbonate + ATP = (2S)-ethylmalonyl-CoA + ADP + phosphate + H(+). Its pathway is metabolic intermediate metabolism; propanoyl-CoA degradation; succinyl-CoA from propanoyl-CoA: step 1/3. In terms of biological role, this is one of the 2 subunits of the biotin-dependent propionyl-CoA carboxylase (PCC), a mitochondrial enzyme involved in the catabolism of odd chain fatty acids, branched-chain amino acids isoleucine, threonine, methionine, and valine and other metabolites. Propionyl-CoA carboxylase catalyzes the carboxylation of propionyl-CoA/propanoyl-CoA to D-methylmalonyl-CoA/(S)-methylmalonyl-CoA. Within the holoenzyme, the alpha subunit catalyzes the ATP-dependent carboxylation of the biotin carried by the biotin carboxyl carrier (BCC) domain, while the beta subunit then transfers the carboxyl group from carboxylated biotin to propionyl-CoA. Propionyl-CoA carboxylase also significantly acts on butyryl-CoA/butanoyl-CoA, which is converted to ethylmalonyl-CoA/(2S)-ethylmalonyl-CoA. Other alternative minor substrates include (2E)-butenoyl-CoA/crotonoyl-CoA. The polypeptide is Propionyl-CoA carboxylase alpha chain, mitochondrial (Mus musculus (Mouse)).